The sequence spans 251 residues: 1-(5-phosphoribosyl)-5-[(5-phosphoribosylamino)methylideneamino] imidazole-4-carboxamide isomerase (251 aa).

Asp8 serves as the catalytic Proton acceptor. Residue Asp131 is the Proton donor of the active site.

It belongs to the HisA/HisF family.

It is found in the cytoplasm. The catalysed reaction is 1-(5-phospho-beta-D-ribosyl)-5-[(5-phospho-beta-D-ribosylamino)methylideneamino]imidazole-4-carboxamide = 5-[(5-phospho-1-deoxy-D-ribulos-1-ylimino)methylamino]-1-(5-phospho-beta-D-ribosyl)imidazole-4-carboxamide. It participates in amino-acid biosynthesis; L-histidine biosynthesis; L-histidine from 5-phospho-alpha-D-ribose 1-diphosphate: step 4/9. In Burkholderia ambifaria (strain MC40-6), this protein is 1-(5-phosphoribosyl)-5-[(5-phosphoribosylamino)methylideneamino] imidazole-4-carboxamide isomerase.